Here is a 64-residue protein sequence, read N- to C-terminus: MALPKYKTSRANTHSRRANWKAKAAQTVTCPNCGAPTLPHMACPSCGSFRGRVYREAVRSIHTK.

The tract at residues 1–20 is disordered; it reads MALPKYKTSRANTHSRRANW.

Belongs to the bacterial ribosomal protein bL32 family.

This is Large ribosomal subunit protein bL32 from Bifidobacterium adolescentis (strain ATCC 15703 / DSM 20083 / NCTC 11814 / E194a).